We begin with the raw amino-acid sequence, 601 residues long: Glutathione-regulated potassium-efflux system protein KefB (601 aa).

13 helical membrane passes run 4–24, 29–49, 55–75, 87–107, 115–135, 152–172, 177–197, 207–227, 230–250, 268–288, 291–311, 324–344, and 356–376; these read SDFLLAGVLFLFAAVAAVPLA, IGAVLGYLLAGIAIGPWGLGF, EILHFSELGVVFLMFIIGLEL, IFGVGAAQVLLSAALLAGLLM, AAVVGGIGLAMSSTAMALQLM, VLLFQDLAVIPALALVPLLAG, HFDWMKIGMKVLAFVGMLIGG, FIAASGVREVFTAATLLLVLG, LFMDALGLSMALGTFIAGVLL, GLLLGLFFISVGMSLNLGVLY, LLWVVISVVVLVAVKILVLYL, MQFAGVLSQGGEFAFVLFSTA, and ALLLVTVTLSMMTTPLLMKLV. Positions 400 to 519 constitute an RCK N-terminal domain; it reads KPQVIVVGFG…AGVTQFSRET (120 aa).

This sequence belongs to the monovalent cation:proton antiporter 2 (CPA2) transporter (TC 2.A.37) family. KefB subfamily. In terms of assembly, interacts with the regulatory subunit KefG.

The protein resides in the cell inner membrane. Pore-forming subunit of a potassium efflux system that confers protection against electrophiles. Catalyzes K(+)/H(+) antiport. The chain is Glutathione-regulated potassium-efflux system protein KefB from Escherichia coli O1:K1 / APEC.